The primary structure comprises 155 residues: 2-C-methyl-D-erythritol 2,4-cyclodiphosphate synthase (155 aa).

2 residues coordinate a divalent metal cation: Asp8 and His10. Residues 8–10 (DVH) and 34–35 (HS) each bind 4-CDP-2-C-methyl-D-erythritol 2-phosphate. Residue His42 coordinates a divalent metal cation. 4-CDP-2-C-methyl-D-erythritol 2-phosphate-binding positions include 56-58 (DIG), 61-65 (FPDSD), 100-106 (AQKPKML), 132-135 (TTEE), Phe139, and Lys142.

This sequence belongs to the IspF family. In terms of assembly, homotrimer. A divalent metal cation serves as cofactor.

The enzyme catalyses 4-CDP-2-C-methyl-D-erythritol 2-phosphate = 2-C-methyl-D-erythritol 2,4-cyclic diphosphate + CMP. Its pathway is isoprenoid biosynthesis; isopentenyl diphosphate biosynthesis via DXP pathway; isopentenyl diphosphate from 1-deoxy-D-xylulose 5-phosphate: step 4/6. Its function is as follows. Involved in the biosynthesis of isopentenyl diphosphate (IPP) and dimethylallyl diphosphate (DMAPP), two major building blocks of isoprenoid compounds. Catalyzes the conversion of 4-diphosphocytidyl-2-C-methyl-D-erythritol 2-phosphate (CDP-ME2P) to 2-C-methyl-D-erythritol 2,4-cyclodiphosphate (ME-CPP) with a corresponding release of cytidine 5-monophosphate (CMP). This Clostridium botulinum (strain Okra / Type B1) protein is 2-C-methyl-D-erythritol 2,4-cyclodiphosphate synthase.